The chain runs to 749 residues: Myosin-binding protein 2 (749 aa).

The helical transmembrane segment at 17-37 threads the bilayer; that stretch reads ITLILVYAFLEWSLIFFILLN. Residues 164 to 184 form a disordered region; the sequence is NLNDSQEETEEKKVPQSHEKL. The segment covering 173-184 has biased composition (basic and acidic residues); that stretch reads EEKKVPQSHEKL. The GTD-binding domain occupies 411–509; it reads LTVDKLKFEL…ELEKELEVYR (99 aa). A coiled-coil region spans residues 589–621; sequence ERLSILGRLKFLEEKLTDLNNEEDDEEEAKTFE. The disordered stretch occupies residues 608 to 640; it reads NNEEDDEEEAKTFESNGSINGNEHIHGKETNGK. A compositionally biased stretch (basic and acidic residues) spans 630-639; sequence EHIHGKETNG. Residues 676–710 are a coiled coil; the sequence is DSEKGENVTIEEEVDELYERLEALEADREFLRHCV.

Interacts with myosin XI-K and XI-1. As to expression, expressed in leaf epidermal cells, roots and root hairs.

It localises to the endomembrane system. Functionally, membrane-anchored myosin receptors that define a distinct, plant-specific transport vesicle compartment. This is Myosin-binding protein 2 from Arabidopsis thaliana (Mouse-ear cress).